Here is a 280-residue protein sequence, read N- to C-terminus: DNA repair protein RecO (280 aa).

The tract at residues 261 to 280 (DMAHGNHTGQEDLPATASGA) is disordered.

Belongs to the RecO family.

Functionally, involved in DNA repair and RecF pathway recombination. In Mycolicibacterium smegmatis (strain ATCC 700084 / mc(2)155) (Mycobacterium smegmatis), this protein is DNA repair protein RecO.